The primary structure comprises 175 residues: Large ribosomal subunit protein uL10 (175 aa).

The protein belongs to the universal ribosomal protein uL10 family. In terms of assembly, part of the ribosomal stalk of the 50S ribosomal subunit. The N-terminus interacts with L11 and the large rRNA to form the base of the stalk. The C-terminus forms an elongated spine to which L12 dimers bind in a sequential fashion forming a multimeric L10(L12)X complex.

Forms part of the ribosomal stalk, playing a central role in the interaction of the ribosome with GTP-bound translation factors. This Alkalilimnicola ehrlichii (strain ATCC BAA-1101 / DSM 17681 / MLHE-1) protein is Large ribosomal subunit protein uL10.